The following is a 188-amino-acid chain: ATP synthase subunit p18, mitochondrial (188 aa).

The N-terminal 18 residues, 1 to 18 (MMRRVYSPVFCSVAAARF), are a transit peptide targeting the mitochondrion. PPR repeat units follow at residues 36-70 (TNTAPWIEKIKKCKYYDEAGEVLVNMNVSNCPPDI), 75-109 (ATLQCIYQSPSKQSTPVDNESKFCAMMDLLEEMQH), and 116-146 (NEESWTWVMKECVKSGQFRLGYCIQQVMETE).

F-type ATPases have 2 components, F(1) - the catalytic core - and F(o) - the membrane proton channel. F(1) has five subunits: alpha(3), beta(3), gamma(1), delta(1), epsilon(1), plus the additional subunit P18 (Tb427.05.1710) that is not present in F(1)F(o) ATP synthase from metazoa. Subunit P18 (Tb927.5.1710) interacts with the alpha subunit with a 1:1 stoichiometry; the interaction is direct. Subunit gamma is part of the central stalk. F(o) has three main subunits: a, b and c. The trypanosomal ATPase complex contains additional subunits that are not present in the F(1)F(o) ATP synthase from metazoa.

The protein resides in the mitochondrion. The protein localises to the mitochondrion inner membrane. In terms of biological role, mitochondrial membrane ATP synthase (F(1)F(o) ATP synthase) produces ATP from ADP in the presence of a proton gradient across the membrane which is generated by electron transport complexes of the respiratory chain. F-type ATPases consist of two structural domains, F(1) - containing the extramembraneous catalytic core, and F(o) - containing the membrane proton channel, linked together by a central stalk and a peripheral stalk. During catalysis, ATP synthesis in the catalytic domain of F(1) is coupled via a rotary mechanism of the central stalk subunits to proton translocation. Subunits alpha and beta form the catalytic core in F(1). Rotation of the central stalk against the surrounding alpha(3)beta(3) subunits leads to hydrolysis of ATP in three separate catalytic sites on the beta subunits. Contrary to the procyclic, insect form that requires F(1)F(o) ATP synthase for ATP synthesis, the bloodstream form relies on ATP hydrolysis by F(1)F(o) ATP synthase to maintain its mitochondrial membrane potential. The polypeptide is ATP synthase subunit p18, mitochondrial (Trypanosoma brucei brucei).